A 352-amino-acid chain; its full sequence is Phosphoribosylformylglycinamidine cyclo-ligase (352 aa).

The protein belongs to the AIR synthase family.

Its subcellular location is the cytoplasm. The catalysed reaction is 2-formamido-N(1)-(5-O-phospho-beta-D-ribosyl)acetamidine + ATP = 5-amino-1-(5-phospho-beta-D-ribosyl)imidazole + ADP + phosphate + H(+). The protein operates within purine metabolism; IMP biosynthesis via de novo pathway; 5-amino-1-(5-phospho-D-ribosyl)imidazole from N(2)-formyl-N(1)-(5-phospho-D-ribosyl)glycinamide: step 2/2. This chain is Phosphoribosylformylglycinamidine cyclo-ligase, found in Hahella chejuensis (strain KCTC 2396).